The sequence spans 272 residues: Putative pyruvate, phosphate dikinase regulatory protein (272 aa).

Position 154-161 (154-161) interacts with ADP; the sequence is GVSRTSKS.

The protein belongs to the pyruvate, phosphate/water dikinase regulatory protein family. PDRP subfamily.

The enzyme catalyses N(tele)-phospho-L-histidyl/L-threonyl-[pyruvate, phosphate dikinase] + ADP = N(tele)-phospho-L-histidyl/O-phospho-L-threonyl-[pyruvate, phosphate dikinase] + AMP + H(+). The catalysed reaction is N(tele)-phospho-L-histidyl/O-phospho-L-threonyl-[pyruvate, phosphate dikinase] + phosphate + H(+) = N(tele)-phospho-L-histidyl/L-threonyl-[pyruvate, phosphate dikinase] + diphosphate. In terms of biological role, bifunctional serine/threonine kinase and phosphorylase involved in the regulation of the pyruvate, phosphate dikinase (PPDK) by catalyzing its phosphorylation/dephosphorylation. This Wolbachia sp. subsp. Brugia malayi (strain TRS) protein is Putative pyruvate, phosphate dikinase regulatory protein.